Here is a 519-residue protein sequence, read N- to C-terminus: cAMP-dependent protein kinase catalytic subunit (519 aa).

The interval methionine 1 to alanine 195 is disordered. 3 stretches are compositionally biased toward polar residues: residues proline 10–leucine 25, valine 116–isoleucine 159, and threonine 173–lysine 191. A Protein kinase domain is found at phenylalanine 208–phenylalanine 463. ATP is bound by residues leucine 214–valine 222 and lysine 237. Aspartate 331 functions as the Proton acceptor in the catalytic mechanism. One can recognise an AGC-kinase C-terminal domain in the interval alanine 464–phenylalanine 519.

Belongs to the protein kinase superfamily. Ser/Thr protein kinase family.

It catalyses the reaction L-seryl-[protein] + ATP = O-phospho-L-seryl-[protein] + ADP + H(+). The catalysed reaction is L-threonyl-[protein] + ATP = O-phospho-L-threonyl-[protein] + ADP + H(+). Its activity is regulated as follows. Activated by cAMP. Functions downstream of adenylate cyclase to regulate trap-development for nematode capture. The protein is cAMP-dependent protein kinase catalytic subunit of Arthrobotrys oligospora (strain ATCC 24927 / CBS 115.81 / DSM 1491) (Nematode-trapping fungus).